Reading from the N-terminus, the 668-residue chain is MAHSIEELAITTIRTLSIDAIEKAKSGHPGMPMGAAPMAYTLWTKFMNHNPANPNWFNRDRFVLSAGHGSMLLYSLLHLSGYDVSMDDLKQFRQWGSKTPGHPEYGHTPGVEATTGPLGQGIAMAVGMAMAERHLAATYNRDGFEIINHYTYAICGDGDLMEGVASEAASLAGHLKLGRLIVLYDSNDISLDGELNLSFSENVAQRFQAYGWQYLRVEDGNNIEEIAKALEEARADLSRPTLIEVKTTIGYGAPNKAGTSGVHGAPLGAQEAKLTKEAYRWTFAEDFYVPEEVYAHFRATVQEPGAKKEAKWNEQLAAYEQAHPELAAQLKRAIEGKLPDGWEASLPVYEAGKSLATRSSSGEVINAIAKAVPQLFGGSADLASSNKTLIKGGGNFLPDSYEGRNVWFGVREFAMGAALNGMALHGGLKVFGGTFFVFSDYLRPAIRLAALMGLPVIYVLTHDSIAVGEDGPTHEPIEHLASLRAMPNLSVIRPADANETAAAWRLALESTDKPTALVLTRQDVPTLAATAELAYEGVKKGAYVVSPAKNGAPEALLLATGSEVGLAVKAQEALAAEGIHVSVISMPSWDRFEAQPKSYRDEVLPPAVTKRLAIEMGASLGWERYVGAEGDILAIDRFGASAPGEKIMAEYGFTVDNVVRRTKALLGK.

Residue histidine 28 participates in substrate binding. Residues histidine 68 and 116 to 118 (GPL) contribute to the thiamine diphosphate site. Aspartate 157 serves as a coordination point for Mg(2+). Thiamine diphosphate contacts are provided by glycine 158 and asparagine 187. Mg(2+) contacts are provided by asparagine 187 and isoleucine 189. 3 residues coordinate substrate: histidine 263, arginine 358, and serine 385. Residue histidine 263 coordinates thiamine diphosphate. Glutamate 412 (proton donor) is an active-site residue. Thiamine diphosphate is bound at residue phenylalanine 438. Substrate-binding residues include histidine 462, aspartate 470, histidine 474, and arginine 521.

The protein belongs to the transketolase family. Homodimer. Requires Mg(2+) as cofactor. The cofactor is thiamine diphosphate.

It carries out the reaction D-sedoheptulose 7-phosphate + D-glyceraldehyde 3-phosphate = aldehydo-D-ribose 5-phosphate + D-xylulose 5-phosphate. Catalyzes the transfer of a two-carbon ketol group from a ketose donor to an aldose acceptor, likely via a covalent intermediate with the cofactor thiamine pyrophosphate. Can use L-erythrulose as donor and D-ribose-5-phosphate as acceptor substrates, forming glycolaldehyde and D-sedoheptulose-7-phosphate. For synthetic purposes, is able to use hydroxypyruvate (HPA) as donor substrate, making the reaction irreversible due to the release of carbon dioxide, and various aldehydes as acceptor substrates, which leads to the corresponding ketoses. Thus, using hydroxypyruvate as donor and three different aldehydes as acceptors, i.e. glycolaldehyde, D-glyceraldehyde and butyraldehyde, the enzyme stereoselectively forms the corresponding products L-erythrulose, D-xylulose and (3S)-1,3-dihydroxyhexan-2-one, respectively. The polypeptide is Transketolase (Geobacillus stearothermophilus (Bacillus stearothermophilus)).